Here is a 470-residue protein sequence, read N- to C-terminus: Myricetin 3-O-rhamnoside 1,2-glucosyltransferase UGT709G2 (470 aa).

H20 acts as the Proton acceptor in catalysis. Residue H20 coordinates an anthocyanidin. The Charge relay role is filled by D117. Residues A340, Q342, H357, W360, N361, S362, and E365 each contribute to the UDP-alpha-D-glucose site. An anthocyanidin is bound at residue A380. Residues D381 and Q382 each contribute to the UDP-alpha-D-glucose site.

It belongs to the UDP-glycosyltransferase family. In terms of tissue distribution, expressed in young cromes.

It catalyses the reaction myricetin 3-O-alpha-L-rhamnoside + UDP-alpha-D-glucose = myricetin 3-O-[beta-D-glucosyl-(1-&gt;2)-alpha-L-rhamnoside] + UDP + H(+). The protein operates within flavonoid metabolism. Its function is as follows. Glucosyltransferase involved in montbretin A (MbA) biosynthesis. Catalyzes the glucosylation of myricetin 3-O-alpha-L-rhamnoside (MR) to produce myricetin 3-O-[beta-D-glucosyl-(1-&gt;2)-alpha-L-rhamnoside] (MRG), a precursor of MbA. MbA is a potent inhibitor of human pancreatic alpha-amylase and is being developed as drug candidate to treat type-2 diabetes. In vitro, is able to transfer UDP-xylose with 50-fold less efficiency compared with UDP-glucose. In vitro, can use myricetin 3-O-glucoside and quercetin 3-O-glucoside as substrates, although these two flavonoids may not be physiological substrates in vivo. This chain is Myricetin 3-O-rhamnoside 1,2-glucosyltransferase UGT709G2, found in Crocosmia x crocosmiiflora (Montbretia).